A 393-amino-acid polypeptide reads, in one-letter code: Arginine--pyruvate transaminase AruH (393 aa).

An N6-(pyridoxal phosphate)lysine modification is found at lysine 237.

The protein belongs to the class-I pyridoxal-phosphate-dependent aminotransferase family. Homodimer. The cofactor is pyridoxal 5'-phosphate.

The enzyme catalyses L-arginine + pyruvate = 5-guanidino-2-oxopentanoate + L-alanine. Its pathway is amino-acid degradation; L-arginine degradation. In terms of biological role, catalyzes the conversion of L-arginine into 2-ketoarginine via transamination. L-arginine is the best substrate, but it can also use L-lysine, L-methionine, L-leucine, ornithine and L-glutamine, which indicates that it may have a broader physiological function in amino acid catabolism. The chain is Arginine--pyruvate transaminase AruH (aruH) from Pseudomonas aeruginosa (strain ATCC 15692 / DSM 22644 / CIP 104116 / JCM 14847 / LMG 12228 / 1C / PRS 101 / PAO1).